The sequence spans 169 residues: Cilia- and flagella-associated protein HOATZ (169 aa).

3 disordered regions span residues 1-21 (METG…MCPP), 52-89 (SQLV…LASN), and 144-169 (KAKE…KTLD). Polar residues predominate over residues 75–89 (SENSHSSQSFHLASN).

This sequence belongs to the HOATZ family.

It localises to the cytoplasm. Its subcellular location is the cell projection. The protein localises to the cilium. Functionally, required for motile ciliogenesis and flagellar genesis by mediating the maturation of the glycolytic enzyme ENO4. This Homo sapiens (Human) protein is Cilia- and flagella-associated protein HOATZ.